The chain runs to 56 residues: MGFENIWFSHPRKYGQGSRSCRSCANKHGIIRKYGLNICRQCFREYASDIGFKKLD.

Cys21, Cys24, Cys39, and Cys42 together coordinate Zn(2+).

Belongs to the universal ribosomal protein uS14 family. In terms of assembly, component of the 40S small ribosomal subunit. It depends on Zn(2+) as a cofactor.

Its subcellular location is the cytoplasm. The protein resides in the cytosol. The protein localises to the rough endoplasmic reticulum. This is Small ribosomal subunit protein uS14 (RpS29) from Lysiphlebus testaceipes (Greenbugs aphid parastoid).